The primary structure comprises 361 residues: Peptide chain release factor 1 (361 aa).

At Gln235 the chain carries N5-methylglutamine. The segment at 288-307 is disordered; the sequence is AARSADRKDQVGSGDRSERI.

Belongs to the prokaryotic/mitochondrial release factor family. Methylated by PrmC. Methylation increases the termination efficiency of RF1.

It localises to the cytoplasm. Its function is as follows. Peptide chain release factor 1 directs the termination of translation in response to the peptide chain termination codons UAG and UAA. The chain is Peptide chain release factor 1 from Nitrobacter hamburgensis (strain DSM 10229 / NCIMB 13809 / X14).